A 265-amino-acid polypeptide reads, in one-letter code: Putative cysteine-rich receptor-like protein kinase At4g11521 (265 aa).

The signal sequence occupies residues methionine 1–threonine 23. 2 consecutive Gnk2-homologous domains span residues glutamine 24–phenylalanine 122 and methionine 128–phenylalanine 241. N-linked (GlcNAc...) asparagine glycosylation is found at asparagine 34, asparagine 102, and asparagine 119. Residue asparagine 247 is glycosylated (N-linked (GlcNAc...) asparagine).

It belongs to the protein kinase superfamily. Ser/Thr protein kinase family. CRK subfamily.

The protein localises to the secreted. This is Putative cysteine-rich receptor-like protein kinase At4g11521 from Arabidopsis thaliana (Mouse-ear cress).